A 573-amino-acid polypeptide reads, in one-letter code: NADH-ubiquinone oxidoreductase chain 5 (573 aa).

Transmembrane regions (helical) follow at residues 4–24, 44–64, 85–105, 106–126, 147–167, 170–190, 212–234, 239–259, 268–288, 294–314, 337–357, 377–396, 422–442, 452–472, 487–507, and 552–572; these read ISFI…LYYL, IVMT…VLMI, FIML…SPNL, VSIL…VIYF, VALL…YIFY, VMQN…AAMT, SALV…FNIV, WLGQ…GLGA, IIAL…SMGF, FHLL…GAII, SACF…AGFY, FLYF…LVYY, LGLL…IFPF, LKML…LISI, LTLF…GMIF, and LKIY…FLLF.

This sequence belongs to the complex I subunit 5 family.

Its subcellular location is the mitochondrion inner membrane. The enzyme catalyses a ubiquinone + NADH + 5 H(+)(in) = a ubiquinol + NAD(+) + 4 H(+)(out). Functionally, core subunit of the mitochondrial membrane respiratory chain NADH dehydrogenase (Complex I) that is believed to belong to the minimal assembly required for catalysis. Complex I functions in the transfer of electrons from NADH to the respiratory chain. The immediate electron acceptor for the enzyme is believed to be ubiquinone. The protein is NADH-ubiquinone oxidoreductase chain 5 (mt:ND5) of Drosophila yakuba (Fruit fly).